Reading from the N-terminus, the 297-residue chain is Large ribosomal subunit protein uL18 (297 aa).

Gly2 bears the N-acetylglycine mark. An N6-acetyllysine mark is found at Lys5 and Lys48. The residue at position 185 (Ser185) is a Phosphoserine. Residue Lys220 is modified to N6-acetyllysine; alternate. A Glycyl lysine isopeptide (Lys-Gly) (interchain with G-Cter in SUMO1); alternate cross-link involves residue Lys220. Lys220 participates in a covalent cross-link: Glycyl lysine isopeptide (Lys-Gly) (interchain with G-Cter in SUMO2); alternate. Thr232 carries the post-translational modification Phosphothreonine. Residues 253-297 are disordered; that stretch reads YEKKPKREVKKKRWNRPKMSLAQKKDRVAQKKASFLRAQERAAES. The segment covering 258 to 268 has biased composition (basic residues); the sequence is KREVKKKRWNR. Phosphoserine is present on Ser272.

The protein belongs to the universal ribosomal protein uL18 family. Component of the large ribosomal subunit (LSU). Part of the 5S RNP complex, which is a LSU subcomplex composed of the 5S RNA, RPL5 and RPL11. Component of a hexameric 5S RNP precursor complex, composed of 5S RNA, RRS1, RPF2/BXDC1, RPL5, RPL11 and HEATR3; this complex acts as a precursor for ribosome assembly. Interacts with NVL in an ATP-dependent manner. Interacts with RRP1B. Interacts with IPO5, IPO7 and KPNB1; these interactions may be involved in RPL5 nuclear import for the assembly of ribosomal subunits. Interacts with RRP1B.

It localises to the cytoplasm. It is found in the nucleus. The protein resides in the nucleolus. Functionally, component of the ribosome, a large ribonucleoprotein complex responsible for the synthesis of proteins in the cell. The small ribosomal subunit (SSU) binds messenger RNAs (mRNAs) and translates the encoded message by selecting cognate aminoacyl-transfer RNA (tRNA) molecules. The large subunit (LSU) contains the ribosomal catalytic site termed the peptidyl transferase center (PTC), which catalyzes the formation of peptide bonds, thereby polymerizing the amino acids delivered by tRNAs into a polypeptide chain. The nascent polypeptides leave the ribosome through a tunnel in the LSU and interact with protein factors that function in enzymatic processing, targeting, and the membrane insertion of nascent chains at the exit of the ribosomal tunnel. As part of the 5S RNP/5S ribonucleoprotein particle it is an essential component of the LSU, required for its formation and the maturation of rRNAs. It also couples ribosome biogenesis to p53/TP53 activation. As part of the 5S RNP it accumulates in the nucleoplasm and inhibits MDM2, when ribosome biogenesis is perturbed, mediating the stabilization and the activation of TP53. This is Large ribosomal subunit protein uL18 (Rpl5) from Rattus norvegicus (Rat).